A 314-amino-acid chain; its full sequence is Acetyl-coenzyme A carboxylase carboxyl transferase subunit alpha (314 aa).

Residues 32–289 enclose the CoA carboxyltransferase C-terminal domain; it reads EIDMLEASLE…KSAFVAQLDS (258 aa).

It belongs to the AccA family. As to quaternary structure, acetyl-CoA carboxylase is a heterohexamer composed of biotin carboxyl carrier protein (AccB), biotin carboxylase (AccC) and two subunits each of ACCase subunit alpha (AccA) and ACCase subunit beta (AccD).

It is found in the cytoplasm. The catalysed reaction is N(6)-carboxybiotinyl-L-lysyl-[protein] + acetyl-CoA = N(6)-biotinyl-L-lysyl-[protein] + malonyl-CoA. It functions in the pathway lipid metabolism; malonyl-CoA biosynthesis; malonyl-CoA from acetyl-CoA: step 1/1. Component of the acetyl coenzyme A carboxylase (ACC) complex. First, biotin carboxylase catalyzes the carboxylation of biotin on its carrier protein (BCCP) and then the CO(2) group is transferred by the carboxyltransferase to acetyl-CoA to form malonyl-CoA. The chain is Acetyl-coenzyme A carboxylase carboxyl transferase subunit alpha from Staphylococcus aureus (strain JH9).